We begin with the raw amino-acid sequence, 100 residues long: Small ribosomal subunit protein uS14 (100 aa).

The protein belongs to the universal ribosomal protein uS14 family. In terms of assembly, part of the 30S ribosomal subunit. Contacts proteins S3 and S10.

Binds 16S rRNA, required for the assembly of 30S particles and may also be responsible for determining the conformation of the 16S rRNA at the A site. This is Small ribosomal subunit protein uS14 from Picosynechococcus sp. (strain ATCC 27264 / PCC 7002 / PR-6) (Agmenellum quadruplicatum).